The following is a 304-amino-acid chain: WW domain-binding protein 1 (304 aa).

A disordered region spans residues M1–P26. 2 consecutive short sequence motifs (PPxY motif) follow at residues P159–Y162 and P172–Y176. Disordered stretches follow at residues T206 to P235 and C252 to P304. Positions E209–L218 are enriched in polar residues.

In terms of assembly, binds to the WW domain of YAP1, WWP1 and WWP2. Interacts with WWOX. Interacts with NEDD4.

This Mus musculus (Mouse) protein is WW domain-binding protein 1 (Wbp1).